The chain runs to 184 residues: Protein DESIGUAL 3 (184 aa).

The N-terminal stretch at 1-24 is a signal peptide; sequence MESELGFLVSVVIICADITATVLG. A compositionally biased stretch (basic residues) spans 34–45; it reads APHHHHQQHSRH. The segment at 34 to 53 is disordered; sequence APHHHHQQHSRHSGSGCRRS. Transmembrane regions (helical) follow at residues 62–82, 99–119, and 140–160; these read GVAA…LGGC, ILAV…YSTL, and FFLI…AYYV. Asparagine 180 carries N-linked (GlcNAc...) asparagine glycosylation.

This sequence belongs to the DESIGUAL family. As to expression, mainly expressed in roots, inflorescences and developing leaves, and, at low levels, in mature leaves.

The protein resides in the endoplasmic reticulum membrane. Functionally, involved, partially redundantly with VCC/DEAL1 and DEAL2, to ensure bilateral symmetry development and early leaf margin patterning, probably via the regulation of auxin and CUC2 distribution. This chain is Protein DESIGUAL 3, found in Arabidopsis thaliana (Mouse-ear cress).